We begin with the raw amino-acid sequence, 215 residues long: uncharacterized protein (215 aa).

5 helical membrane-spanning segments follow: residues 1–21 (MTAEFIIRLILAAIACGAIGM), 36–56 (VLIGMGSALFMIVSKYGFADV), 67–87 (SRIAAQVVTGVGFIGAGNILV), 92–112 (IVGLTTAADIWVTAAIGMVIG), and 118–138 (LGIYGSVMTLLVLEVFHQLTF).

It belongs to the MgtC/SapB family.

The protein resides in the cell inner membrane. This is an uncharacterized protein from Escherichia coli O157:H7.